A 546-amino-acid polypeptide reads, in one-letter code: Sodium/hydrogen exchanger 2 (546 aa).

At 1 to 21 (MTMFASLTSKMLSVSTSDHAS) the chain is on the cytoplasmic side. Residues 22–42 (VVSLNLFVALLCACIVIGHLL) form a helical membrane-spanning segment. Residues 43-47 (EENRW) lie on the Vacuolar side of the membrane. A helical membrane pass occupies residues 48–68 (MNESITALLIGLGTGVVILLI). Residues 69 to 75 (SRGKNSH) are Cytoplasmic-facing. Residues 76–96 (LLVFSEDLFFIYLLPPIIFNA) constitute an intramembrane region (helical). The Cytoplasmic segment spans residues 97 to 111 (GFQVKKKQFFRNFVT). Residues 112–132 (IMAFGAIGTVVSCTIISLGAI) form a helical membrane-spanning segment. Topologically, residues 133–148 (QFFKKLDIGTFDLGDF) are vacuolar. 2 intramembrane regions (helical) span residues 149–168 (LAIG…QVLN) and 174–194 (LLYS…VVLF). The Vacuolar portion of the chain corresponds to 195-218 (NAIQSFDLTHLNHEAAFQFLGNFF). A helical transmembrane segment spans residues 219–239 (YLFLLSTGLGVATGLISAYVI). Residues 240–264 (KKLYFGRHSTDREVALMMLMAYLSY) are Cytoplasmic-facing. Residues 265 to 285 (MLAELFALSGILTVFFCGIVM) form a helical membrane-spanning segment. Over 286 to 304 (SHYTWHNVTESSRITTKHA) the chain is Vacuolar. N-linked (GlcNAc...) asparagine glycosylation occurs at asparagine 292. The helical transmembrane segment at 305–325 (FATLSFLAETFIFLYVGMDAL) threads the bilayer. Over 326–344 (DIEKWRFVSDSPGTSVAVS) the chain is Cytoplasmic. Residues 345–365 (SILMGLVMLGRAAFVFPLSFL) traverse the membrane as a helical segment. Residues 366–381 (SNLAKKHQSEKISIKQ) lie on the Vacuolar side of the membrane. Residues 382 to 402 (QVVIWWAGLMRGAVSMALAYN) form a helical membrane-spanning segment. The Cytoplasmic segment spans residues 403-415 (KFTRSGHTELRGN). A helical membrane pass occupies residues 416–436 (AIMITSTITVCLFSTMVFGML). Residues 437–546 (TKPLIRYLMP…ERSSHDLSKP (110 aa)) lie on the Vacuolar side of the membrane.

Belongs to the monovalent cation:proton antiporter 1 (CPA1) transporter (TC 2.A.36) family. As to expression, expressed in roots and shoots.

The protein resides in the vacuole membrane. The enzyme catalyses Na(+)(in) + H(+)(out) = Na(+)(out) + H(+)(in). It catalyses the reaction K(+)(in) + H(+)(out) = K(+)(out) + H(+)(in). Its function is as follows. Acts in low affinity electroneutral exchange of protons for cations such as Na(+) or K(+) across membranes. May also exchange Li(+) and Cs(+) with a lower affinity. Involved in vacuolar ion compartmentalization necessary for cell volume regulation and cytoplasmic Na(+) detoxification. This chain is Sodium/hydrogen exchanger 2 (NHX2), found in Arabidopsis thaliana (Mouse-ear cress).